Consider the following 331-residue polypeptide: Type II secretion system protein K (331 aa).

The propeptide at 1–9 (MPSCRRQGG) is leader sequence. The chain crosses the membrane as a helical span at residues 8–27 (GGMALLVVLLILSVMVIIAS). The Periplasmic segment spans residues 28 to 331 (NMSGRLQLEL…MLRRLNGGAE (304 aa)).

Belongs to the GSP K family. In terms of assembly, type II secretion is composed of four main components: the outer membrane complex, the inner membrane complex, the cytoplasmic secretion ATPase and the periplasm-spanning pseudopilus. Interacts with core component ExeG. Cleaved by prepilin peptidase.

The protein localises to the cell inner membrane. In terms of biological role, component of the type II secretion system required for the energy-dependent secretion of extracellular factors such as proteases and toxins from the periplasm. Plays a role in pseudopilus assembly and seems to control its length. Interacts with the pseudopilus tip complex that is critical for the recognition and binding of secretion substrates. This chain is Type II secretion system protein K (exeK), found in Aeromonas hydrophila.